Consider the following 242-residue polypeptide: Ribosomal RNA small subunit methyltransferase G (242 aa).

Residues G78, L83, 130–131, and R151 contribute to the S-adenosyl-L-methionine site; that span reads AE.

It belongs to the methyltransferase superfamily. RNA methyltransferase RsmG family.

The protein resides in the cytoplasm. In terms of biological role, specifically methylates the N7 position of guanine in position 518 of 16S rRNA. The chain is Ribosomal RNA small subunit methyltransferase G from Salinispora arenicola (strain CNS-205).